Consider the following 86-residue polypeptide: Small ribosomal subunit protein bS20 (86 aa).

The disordered stretch occupies residues 1–25; it reads MANIKSQIKRNKQNEKRHERNKAVK. Positions 12 to 22 are enriched in basic and acidic residues; sequence KQNEKRHERNK.

It belongs to the bacterial ribosomal protein bS20 family.

Its function is as follows. Binds directly to 16S ribosomal RNA. In Nocardioides sp. (strain ATCC BAA-499 / JS614), this protein is Small ribosomal subunit protein bS20.